Consider the following 61-residue polypeptide: uncharacterized protein (61 aa).

A disordered region spans residues 38-61 (TPRPFTPGLADPRRLGPRRVQAAQ).

This is an uncharacterized protein from Homo sapiens (Human).